The primary structure comprises 451 residues: MSNVIENLGKLDRKVTLAIPKAEVEKEKQERLVRLSKTVKMSGFRPGKVPMKMVEKQYGQQVEFEVRFDKAARKFFDITKEQDVKVAGQPKFEIKNEGVGEDEVAFDATFEVYPEVTIGDLSAAEVTRTSTEITDAEVDKTIDILRKQRVHYHARGESGEHGDGGADVTAQNGDRVTVDFVGKIDGVEFAGGKAEDFPFVLGEGRMLPEFEQATLGLKVGESKTFPLAFPADYHGKEVAGKTAEFTVTLKKVEWAHLPEVNEAFAKSLGIADGSVEKMRADIRENLEREVKRRTHAMLKDQVMEALLKASELDVPKALIEQDQERLVEMARRDLEQRGMPNAKDMPIPAEMFAQQAERRVKLGLILAEIVKANGLEAKADQIKAEIEDFAKSYEDPKEVMRWYYGDQQRLAEMEAYVLENNVVNFVCDKAKVTDKKVSFEELTAEGNAQQA.

The PPIase FKBP-type domain occupies 173–258; the sequence is GDRVTVDFVG…LKKVEWAHLP (86 aa).

The protein belongs to the FKBP-type PPIase family. Tig subfamily.

The protein resides in the cytoplasm. The enzyme catalyses [protein]-peptidylproline (omega=180) = [protein]-peptidylproline (omega=0). Involved in protein export. Acts as a chaperone by maintaining the newly synthesized protein in an open conformation. Functions as a peptidyl-prolyl cis-trans isomerase. This chain is Trigger factor, found in Cupriavidus taiwanensis (strain DSM 17343 / BCRC 17206 / CCUG 44338 / CIP 107171 / LMG 19424 / R1) (Ralstonia taiwanensis (strain LMG 19424)).